The primary structure comprises 85 residues: Depressant insect toxin BmK ITa1 (85 aa).

A signal peptide spans 1-21 (MKLFLLLLISASMLIDGLVNA). The LCN-type CS-alpha/beta domain occupies 22–82 (DGYIRGSNGC…TWKSESNTCG (61 aa)). Cystine bridges form between Cys31–Cys81, Cys35–Cys56, Cys42–Cys63, and Cys46–Cys65. Gly82 bears the Glycine amide mark.

The protein belongs to the long (4 C-C) scorpion toxin superfamily. Sodium channel inhibitor family. Beta subfamily. In terms of tissue distribution, expressed by the venom gland.

The protein localises to the secreted. Functionally, depressant insect toxins cause a transient contraction paralysis followed by a slow flaccid paralysis. They bind voltage-independently to sodium channels (Nav) and block action potentials, primarily by depolarizing the axonal membrane and suppressing the sodium current. The polypeptide is Depressant insect toxin BmK ITa1 (Olivierus martensii (Manchurian scorpion)).